A 158-amino-acid chain; its full sequence is Persistence and stress-resistance toxin PasT (158 aa).

Residues 70-158 are required for resistance of nitrosative stress but not persistence or toxic effects; the sequence is GISKTFTTRN…VRAKEVYSAR (89 aa).

This sequence belongs to the ribosome association toxin RatA family. In terms of assembly, associates with 50S ribosomes.

Functionally, toxic component of a type II toxin-antitoxin (TA) system. Binds to 50S ribosomal subunits, preventing them from associating with 30S subunits to form 70S ribosomes. In this strain of E.coli low levels of PasT complement operon disruption, however high levels are toxic; their effects are abrogated by high level expression of cognate antitoxin PasI. Plays a role in persistence after antibiotic exposure and survival of nitrosative stress; the toxic and persistence phenotypes are conferred by the same N-terminal region of the protein, while the stress resistance effects can be uncoupled from them in deletion mutants. The polypeptide is Persistence and stress-resistance toxin PasT (pasT) (Escherichia coli O6:H1 (strain CFT073 / ATCC 700928 / UPEC)).